Here is a 705-residue protein sequence, read N- to C-terminus: Effector protein hopD1 (705 aa).

2 stretches are compositionally biased toward polar residues: residues 1–11 and 28–41; these read MNPLRSIQHNI and QAQQ…SPSQ. 2 disordered regions span residues 1-41 and 173-207; these read MNPL…SPSQ and SSSL…DSGS. Over residues 173–184 the composition is skewed to low complexity; it reads SSSLETPLLSSP.

The protein localises to the secreted. Effector protein involved in non-host recognition. This chain is Effector protein hopD1 (hopD1), found in Pseudomonas syringae pv. tomato (strain ATCC BAA-871 / DC3000).